Reading from the N-terminus, the 206-residue chain is Large ribosomal subunit protein uL4 (206 aa).

The protein belongs to the universal ribosomal protein uL4 family. Part of the 50S ribosomal subunit.

One of the primary rRNA binding proteins, this protein initially binds near the 5'-end of the 23S rRNA. It is important during the early stages of 50S assembly. It makes multiple contacts with different domains of the 23S rRNA in the assembled 50S subunit and ribosome. In terms of biological role, forms part of the polypeptide exit tunnel. This chain is Large ribosomal subunit protein uL4, found in Nitrobacter hamburgensis (strain DSM 10229 / NCIMB 13809 / X14).